Reading from the N-terminus, the 246-residue chain is MEIIPAIDLQNGEAVRLYKGDYDKKTVYSKNPLEIAQKFEQMEAKYLHLVDLDGAKLGQTRNLEIVRKIKDQTNLKIEIGGGIRNLDTVSLYLEQIGVERVILGTAAAEKPDFLKELLVKYGLSRIVVGVDIREGFVSTSGWLEKTTLPYLSFLKDLEKIGVKTVIVTDISKDGTLTGPNFELYDEISKETSLDVIVSGGVKDSSDIQRAADSDFYGIIVGKAYYEGKINLEKEFNHANKKNYPLS.

D8 acts as the Proton acceptor in catalysis. Catalysis depends on D131, which acts as the Proton donor.

This sequence belongs to the HisA/HisF family.

It localises to the cytoplasm. It catalyses the reaction 1-(5-phospho-beta-D-ribosyl)-5-[(5-phospho-beta-D-ribosylamino)methylideneamino]imidazole-4-carboxamide = 5-[(5-phospho-1-deoxy-D-ribulos-1-ylimino)methylamino]-1-(5-phospho-beta-D-ribosyl)imidazole-4-carboxamide. The protein operates within amino-acid biosynthesis; L-histidine biosynthesis; L-histidine from 5-phospho-alpha-D-ribose 1-diphosphate: step 4/9. The chain is 1-(5-phosphoribosyl)-5-[(5-phosphoribosylamino)methylideneamino] imidazole-4-carboxamide isomerase from Lactococcus lactis subsp. cremoris (strain MG1363).